A 253-amino-acid chain; its full sequence is 5-oxoprolinase subunit A (253 aa).

The protein belongs to the LamB/PxpA family. Forms a complex composed of PxpA, PxpB and PxpC.

The catalysed reaction is 5-oxo-L-proline + ATP + 2 H2O = L-glutamate + ADP + phosphate + H(+). In terms of biological role, catalyzes the cleavage of 5-oxoproline to form L-glutamate coupled to the hydrolysis of ATP to ADP and inorganic phosphate. This Bacillus cereus (strain AH820) protein is 5-oxoprolinase subunit A.